The following is a 212-amino-acid chain: Large ribosomal subunit protein uL4 (212 aa).

The tract at residues Arg-45–Gly-71 is disordered. The segment covering Gly-60–Gly-71 has biased composition (basic residues).

This sequence belongs to the universal ribosomal protein uL4 family. In terms of assembly, part of the 50S ribosomal subunit.

Functionally, one of the primary rRNA binding proteins, this protein initially binds near the 5'-end of the 23S rRNA. It is important during the early stages of 50S assembly. It makes multiple contacts with different domains of the 23S rRNA in the assembled 50S subunit and ribosome. In terms of biological role, forms part of the polypeptide exit tunnel. The chain is Large ribosomal subunit protein uL4 from Nostoc punctiforme (strain ATCC 29133 / PCC 73102).